Here is a 497-residue protein sequence, read N- to C-terminus: Succinate-semialdehyde dehydrogenase [NADP(+)] (497 aa).

E264 acts as the Proton acceptor in catalysis. C298 acts as the Nucleophile in catalysis.

This sequence belongs to the aldehyde dehydrogenase family. Homotetramer.

The protein resides in the cytoplasm. It carries out the reaction succinate semialdehyde + NAD(+) + H2O = succinate + NADH + 2 H(+). The catalysed reaction is succinate semialdehyde + NADP(+) + H2O = succinate + NADPH + 2 H(+). The protein operates within amino-acid degradation; 4-aminobutanoate degradation. Inhibited by AMP, ADP anf ATP. Functionally, catalyzes the oxidation of succinate semialdehyde to succinate. Can utilize both NAD(+) or NADP(+) as a coenzyme, but has a 2.5-fold lower activity with NADP(+) than with NAD(+). Functions in a gamma-aminobutyrate (GABA) degradation pathway that allows growth utilizing GABA as a nitrogen source. Functions in the GABA shunt, which allows to bypass 2 reactions in the TCA cycle by removing alpha-ketoglutarate from the cycle and feeding succinate and NADH back into the cycle. The polypeptide is Succinate-semialdehyde dehydrogenase [NADP(+)] (Saccharomyces cerevisiae (strain ATCC 204508 / S288c) (Baker's yeast)).